Reading from the N-terminus, the 269-residue chain is Energy-coupling factor transporter transmembrane protein EcfT (269 aa).

5 consecutive transmembrane segments (helical) span residues 28-48, 49-69, 73-93, 109-129, and 246-266; these read MIIY…LLLL, AFTL…FNGV, IGII…GSVL, AILI…LTLT, and TLAI…KSPS.

It belongs to the energy-coupling factor EcfT family. As to quaternary structure, forms a stable energy-coupling factor (ECF) transporter complex composed of 2 membrane-embedded substrate-binding proteins (S component), 2 ATP-binding proteins (A component) and 2 transmembrane proteins (T component). May be able to interact with more than 1 S component at a time.

It localises to the cell membrane. In terms of biological role, transmembrane (T) component of an energy-coupling factor (ECF) ABC-transporter complex. Unlike classic ABC transporters this ECF transporter provides the energy necessary to transport a number of different substrates. This chain is Energy-coupling factor transporter transmembrane protein EcfT, found in Streptococcus equi subsp. equi (strain 4047).